Here is a 239-residue protein sequence, read N- to C-terminus: Leucyl/phenylalanyl-tRNA--protein transferase (239 aa).

The protein belongs to the L/F-transferase family.

It localises to the cytoplasm. The catalysed reaction is N-terminal L-lysyl-[protein] + L-leucyl-tRNA(Leu) = N-terminal L-leucyl-L-lysyl-[protein] + tRNA(Leu) + H(+). The enzyme catalyses N-terminal L-arginyl-[protein] + L-leucyl-tRNA(Leu) = N-terminal L-leucyl-L-arginyl-[protein] + tRNA(Leu) + H(+). It carries out the reaction L-phenylalanyl-tRNA(Phe) + an N-terminal L-alpha-aminoacyl-[protein] = an N-terminal L-phenylalanyl-L-alpha-aminoacyl-[protein] + tRNA(Phe). Its function is as follows. Functions in the N-end rule pathway of protein degradation where it conjugates Leu, Phe and, less efficiently, Met from aminoacyl-tRNAs to the N-termini of proteins containing an N-terminal arginine or lysine. The sequence is that of Leucyl/phenylalanyl-tRNA--protein transferase from Aliivibrio fischeri (strain MJ11) (Vibrio fischeri).